Consider the following 364-residue polypeptide: Chorismate synthase (364 aa).

The NADP(+) site is built by Arg48 and Arg54. FMN-binding positions include 125–127 (RSS), 238–239 (NA), Gly278, 293–297 (KPTSS), and Arg319.

This sequence belongs to the chorismate synthase family. Homotetramer. FMNH2 serves as cofactor.

It carries out the reaction 5-O-(1-carboxyvinyl)-3-phosphoshikimate = chorismate + phosphate. The protein operates within metabolic intermediate biosynthesis; chorismate biosynthesis; chorismate from D-erythrose 4-phosphate and phosphoenolpyruvate: step 7/7. Catalyzes the anti-1,4-elimination of the C-3 phosphate and the C-6 proR hydrogen from 5-enolpyruvylshikimate-3-phosphate (EPSP) to yield chorismate, which is the branch point compound that serves as the starting substrate for the three terminal pathways of aromatic amino acid biosynthesis. This reaction introduces a second double bond into the aromatic ring system. This is Chorismate synthase from Shewanella sediminis (strain HAW-EB3).